Reading from the N-terminus, the 480-residue chain is Flap endonuclease 1 (480 aa).

The N-domain stretch occupies residues 1 to 106; sequence MGIKGLTKFI…SELEKRGEKR (106 aa). Asp-34 contributes to the Mg(2+) binding site. DNA contacts are provided by Arg-47 and Arg-72. Mg(2+)-binding residues include Asp-88, Glu-160, Glu-162, Asp-181, and Asp-183. The tract at residues 124 to 266 is I-domain; that stretch reads EIKKQSGRTV…KTAYNLIKEY (143 aa). DNA is bound at residue Glu-160. Positions 244 and 246 each coordinate DNA. Asp-246 lines the Mg(2+) pocket. The interaction with PCNA stretch occupies residues 349 to 357; it reads TQRRLDTFF. A disordered region spans residues 379–461; that stretch reads TKGKGKKREI…NIKNENVKED (83 aa). Over residues 404–428 the composition is skewed to basic and acidic residues; the sequence is NVKDEKKNNEKVDELKNKSDENLVK. Positions 429 to 438 are enriched in acidic residues; it reads DEEDDQDDYD.

It belongs to the XPG/RAD2 endonuclease family. FEN1 subfamily. Interacts with PCNA. Three molecules of FEN1 bind to one PCNA trimer with each molecule binding to one PCNA monomer. PCNA stimulates the nuclease activity without altering cleavage specificity. It depends on Mg(2+) as a cofactor. Post-translationally, phosphorylated. Phosphorylation upon DNA damage induces relocalization to the nuclear plasma.

It is found in the nucleus. The protein localises to the nucleolus. The protein resides in the nucleoplasm. Its subcellular location is the mitochondrion. With respect to regulation, inhibited by monovalent metal ions. Its function is as follows. Structure-specific nuclease with 5'-flap endonuclease and 5'-3' exonuclease activities involved in DNA replication and repair. During DNA replication, cleaves the 5'-overhanging flap structure that is generated by displacement synthesis when DNA polymerase encounters the 5'-end of a downstream Okazaki fragment. It enters the flap from the 5'-end and then tracks to cleave the flap base, leaving a nick for ligation. Also involved in the long patch base excision repair (LP-BER) pathway, by cleaving within the apurinic/apyrimidinic (AP) site-terminated flap. Acts as a genome stabilization factor that prevents flaps from equilibrating into structures that lead to duplications and deletions. Also possesses 5'-3' exonuclease activity on nicked or gapped double-stranded DNA, and exhibits RNase H activity. Also involved in replication and repair of rDNA and in repairing mitochondrial DNA. In Plasmodium yoelii yoelii, this protein is Flap endonuclease 1.